The sequence spans 248 residues: Probable transcriptional regulatory protein BOV_1660 (248 aa).

Belongs to the TACO1 family.

It is found in the cytoplasm. This is Probable transcriptional regulatory protein BOV_1660 from Brucella ovis (strain ATCC 25840 / 63/290 / NCTC 10512).